We begin with the raw amino-acid sequence, 215 residues long: MTQSLADMRRDYTRDGLAEAQAPGEPFVLFHQWFADAVKTEQAPVEANAMTLATVDGEGRPHCRVLLLKGLDEQGFTFFTNYESAKGQQLQANPFAAMTFFWPALERQVRIEGRVEKVSAQESDAYYQVRPLGSRLGAWASPQSRVIAGREELEGLVKATEARFSDTQPHCPEHWGGYRLLPERIEFWQGRASRLHDRLNYRFVNGQWQRERLAP.

Substrate-binding positions include 9–12 (RRDY) and K69. Residues 64 to 69 (RVLLLK), 79 to 80 (FT), K86, and Q108 contribute to the FMN site. 3 residues coordinate substrate: Y126, R130, and S134. Residues 143 to 144 (QS) and W188 each bind FMN. Substrate is bound at residue 194-196 (RLH). FMN is bound at residue R198.

This sequence belongs to the pyridoxamine 5'-phosphate oxidase family. As to quaternary structure, homodimer. Requires FMN as cofactor.

It carries out the reaction pyridoxamine 5'-phosphate + O2 + H2O = pyridoxal 5'-phosphate + H2O2 + NH4(+). The catalysed reaction is pyridoxine 5'-phosphate + O2 = pyridoxal 5'-phosphate + H2O2. It participates in cofactor metabolism; pyridoxal 5'-phosphate salvage; pyridoxal 5'-phosphate from pyridoxamine 5'-phosphate: step 1/1. The protein operates within cofactor metabolism; pyridoxal 5'-phosphate salvage; pyridoxal 5'-phosphate from pyridoxine 5'-phosphate: step 1/1. In terms of biological role, catalyzes the oxidation of either pyridoxine 5'-phosphate (PNP) or pyridoxamine 5'-phosphate (PMP) into pyridoxal 5'-phosphate (PLP). In Pseudomonas putida (strain GB-1), this protein is Pyridoxine/pyridoxamine 5'-phosphate oxidase.